The following is a 156-amino-acid chain: Cytochrome c-type biogenesis protein CcmE 1 (156 aa).

The Cytoplasmic segment spans residues 1–8 (MNATRKQR). The helical; Signal-anchor for type II membrane protein transmembrane segment at 9-29 (LWLVIGVLTAAALAVTLIALA) threads the bilayer. Residues 30–156 (LQRNMSYLFT…AAAAPLSGVR (127 aa)) are Periplasmic-facing. The heme site is built by His123 and Tyr127.

The protein belongs to the CcmE/CycJ family.

The protein resides in the cell inner membrane. Its function is as follows. Heme chaperone required for the biogenesis of c-type cytochromes. Transiently binds heme delivered by CcmC and transfers the heme to apo-cytochromes in a process facilitated by CcmF and CcmH. This is Cytochrome c-type biogenesis protein CcmE 1 from Xanthomonas campestris pv. campestris (strain 8004).